The sequence spans 135 residues: ATP synthase epsilon chain (135 aa).

This sequence belongs to the ATPase epsilon chain family. F-type ATPases have 2 components, CF(1) - the catalytic core - and CF(0) - the membrane proton channel. CF(1) has five subunits: alpha(3), beta(3), gamma(1), delta(1), epsilon(1). CF(0) has three main subunits: a, b and c.

It localises to the cell inner membrane. In terms of biological role, produces ATP from ADP in the presence of a proton gradient across the membrane. This is ATP synthase epsilon chain from Chelativorans sp. (strain BNC1).